The primary structure comprises 29 residues: GLPICGETCFFGKCNTPKCTCINPICYKN.

A cross-link (cyclopeptide (Gly-Asn)) is located at residues 1–29 (GLPICGETCFFGKCNTPKCTCINPICYKN). 3 disulfide bridges follow: Cys-5–Cys-19, Cys-9–Cys-21, and Cys-14–Cys-26.

This sequence belongs to the cyclotide family. Post-translationally, this is a cyclic peptide.

Functionally, probably participates in a plant defense mechanism. The chain is Cyclotide mden-F from Melicytus dentatus (Tree violet).